A 255-amino-acid polypeptide reads, in one-letter code: tRNA (guanine-N(1)-)-methyltransferase (255 aa).

Residues glycine 119 and 139–144 (IGDFIL) each bind S-adenosyl-L-methionine.

The protein belongs to the RNA methyltransferase TrmD family. In terms of assembly, homodimer.

It is found in the cytoplasm. It carries out the reaction guanosine(37) in tRNA + S-adenosyl-L-methionine = N(1)-methylguanosine(37) in tRNA + S-adenosyl-L-homocysteine + H(+). Functionally, specifically methylates guanosine-37 in various tRNAs. The protein is tRNA (guanine-N(1)-)-methyltransferase of Pseudoalteromonas translucida (strain TAC 125).